The following is a 962-amino-acid chain: Activity-dependent neuroprotective protein 2a (962 aa).

The C2H2-type 1 zinc finger occupies 75 to 98; it reads LCCSLCWYSSRSVPTFRSHIHRCH. The segment at 108–130 adopts a C2H2-type 2; degenerate zinc-finger fold; sequence LMCPYCPFVSSPKVTEQHIQFFH. The C2H2-type 3; degenerate zinc-finger motif lies at 165-188; sequence YTCATCGYHDSLLYVMKKHVLVNH. Residues 219-244 form a C2H2-type 4 zinc finger; the sequence is YHCKLCKLPAETIEHLLYHILSSEKH. Residues 527 to 547 form a C2H2-type 5; degenerate zinc finger; the sequence is VKCLRCKILLTEQGIFQHLLH. C2H2-type zinc fingers lie at residues 549–572 and 650–673; these read LKCLFCPQMFYSFKQIMEHSKKEH and NACPFCQVKLQNPEDYELHLQTKH. The C2H2-type 8; degenerate zinc finger occupies 688-712; the sequence is YKCIYCFGVYTEKSTPKTISIHVQR. The segment at 753–781 is disordered; it reads QGAPEFPKPKKEAVTPRNRRRNTKASKTG. Positions 795–854 form a DNA-binding region, homeobox; sequence PMGMERTSFEDRKDFLSQYFHRKPYVTKTEIELLASRLWINKADVKAHFNSKLTKCLKAI.

It localises to the nucleus. Functionally, may be involved in transcriptional regulation. Required for progression through late erythroid differentiation. May be involved in vasculogenesis. This is Activity-dependent neuroprotective protein 2a from Danio rerio (Zebrafish).